Reading from the N-terminus, the 219-residue chain is Ribose-5-phosphate isomerase A (219 aa).

Substrate-binding positions include 28-31 (TGST), 81-84 (DGAD), and 94-97 (KGGG). E103 acts as the Proton acceptor in catalysis. K121 contacts substrate.

It belongs to the ribose 5-phosphate isomerase family. Homodimer.

The catalysed reaction is aldehydo-D-ribose 5-phosphate = D-ribulose 5-phosphate. Its pathway is carbohydrate degradation; pentose phosphate pathway; D-ribose 5-phosphate from D-ribulose 5-phosphate (non-oxidative stage): step 1/1. Catalyzes the reversible conversion of ribose-5-phosphate to ribulose 5-phosphate. This Shewanella sp. (strain MR-4) protein is Ribose-5-phosphate isomerase A.